We begin with the raw amino-acid sequence, 105 residues long: Multidrug resistance protein EbrA (105 aa).

Transmembrane regions (helical) follow at residues 2–22, 35–55, 57–77, and 84–104; these read LIGYIFLTIAICSESIGAAML, ALVVIGYSLAFYMLSLTLNHI, LSLSYATWSGAGTVLTTVIGV, and LNAKGLIGILLLLSGVVLLNW.

The protein belongs to the drug/metabolite transporter (DMT) superfamily. Small multidrug resistance (SMR) (TC 2.A.7.1) family. EbrA/EbrB subfamily. In terms of assembly, the efflux pump is composed of EbrA and EbrB.

The protein resides in the cell membrane. In terms of biological role, part of a multidrug efflux pump. Confers resistance to cationic lipophilic dyes such as ethidium bromide, acriflavine, pyronine Y and safranin O. The efflux is probably coupled to an influx of protons. This is Multidrug resistance protein EbrA (ebrA) from Bacillus subtilis (strain 168).